A 478-amino-acid polypeptide reads, in one-letter code: Putative multidrug resistance outer membrane protein MdtQ (478 aa).

The first 21 residues, 1–21 (MNRDSFYPAIACFPLLLMLAG), serve as a signal peptide directing secretion. A lipid anchor (N-palmitoyl cysteine) is attached at Cys-22. Residue Cys-22 is the site of S-diacylglycerol cysteine attachment.

This sequence belongs to the outer membrane factor (OMF) (TC 1.B.17) family.

Its subcellular location is the cell outer membrane. In terms of biological role, could be involved in resistance to puromycin, acriflavine and tetraphenylarsonium chloride. This is Putative multidrug resistance outer membrane protein MdtQ (mdtQ) from Shigella flexneri.